We begin with the raw amino-acid sequence, 503 residues long: Cytochrome P450 71B6 (503 aa).

Residues 10 to 30 (TELLPWLLLLLIPPLLIFFLL) form a helical membrane-spanning segment. Cys-446 lines the heme pocket.

It belongs to the cytochrome P450 family. Heme serves as cofactor.

Its subcellular location is the membrane. The polypeptide is Cytochrome P450 71B6 (CYP71B6) (Arabidopsis thaliana (Mouse-ear cress)).